Reading from the N-terminus, the 213-residue chain is GTP-binding protein YPTC4 (213 aa).

13–21 is a GTP binding site; that stretch reads GDTGVGKSC. The Effector region motif lies at 35-43; that stretch reads HDLTIGVEF. GTP-binding positions include 61–65, 119–122, and 149–151; these read DTAGQ, NKCD, and SAR. The segment at 194–213 is disordered; sequence AGPQTVKPGEGGAAKSSSCC. 2 S-geranylgeranyl cysteine lipidation sites follow: Cys-212 and Cys-213.

The protein belongs to the small GTPase superfamily. Rab family.

The protein localises to the cell membrane. Protein transport. Probably involved in vesicular traffic. The protein is GTP-binding protein YPTC4 (YPTC4) of Chlamydomonas reinhardtii (Chlamydomonas smithii).